Here is a 210-residue protein sequence, read N- to C-terminus: Small ribosomal subunit protein uS7 (210 aa).

Over residues 1–22 (MSDEQPAEDETEEAAAESEDTQ) the composition is skewed to acidic residues. The tract at residues 1–23 (MSDEQPAEDETEEAAAESEDTQE) is disordered.

Belongs to the universal ribosomal protein uS7 family. In terms of assembly, part of the 30S ribosomal subunit. Contacts proteins S9 and S11.

In terms of biological role, one of the primary rRNA binding proteins, it binds directly to 16S rRNA where it nucleates assembly of the head domain of the 30S subunit. Is located at the subunit interface close to the decoding center. The sequence is that of Small ribosomal subunit protein uS7 from Halobacterium salinarum (strain ATCC 29341 / DSM 671 / R1).